The following is a 180-amino-acid chain: Der GTPase-activating protein YihI (180 aa).

2 disordered regions span residues 1-87 (MSRK…MTKQ) and 142-180 (GLLE…DYKG). A compositionally biased stretch (basic and acidic residues) spans 23–32 (NRTESDVEGR). Residues 33-43 (LRKRAKKRKGL) show a composition bias toward basic residues. Positions 51-68 (EVNEQKKQSSEQNRDPRL) are enriched in basic and acidic residues. A compositionally biased stretch (acidic residues) spans 165-180 (DLLADFDDINFDDYKG).

It belongs to the YihI family. Interacts with Der.

Its function is as follows. A GTPase-activating protein (GAP) that modifies Der/EngA GTPase function. May play a role in ribosome biogenesis. The polypeptide is Der GTPase-activating protein YihI (Vibrio parahaemolyticus serotype O3:K6 (strain RIMD 2210633)).